The following is a 266-amino-acid chain: Small ribosomal subunit protein uS2 (266 aa).

The protein belongs to the universal ribosomal protein uS2 family.

The protein is Small ribosomal subunit protein uS2 of Corynebacterium diphtheriae (strain ATCC 700971 / NCTC 13129 / Biotype gravis).